Here is a 632-residue protein sequence, read N- to C-terminus: POU domain, class 2, transcription factor 1 (632 aa).

Phosphothreonine occurs at positions 157 and 163. The region spanning 167–241 (EEPSDLEELE…LLEKWLNDAE (75 aa)) is the POU-specific domain. The residue at position 170 (S170) is a Phosphoserine. The span at 243–258 (LSSDSTASSPSALNSP) shows a compositional bias: low complexity. Residues 243 to 273 (LSSDSTASSPSALNSPGLGAEGLNRRRKKRT) form a disordered region. The segment at residues 268-327 (RRKKRTSIETNIRVALEKSFMENQKPTSEDITLIAEQLNMEKEVIRVWFCNRRQKEKRIN) is a DNA-binding region (homeobox). Residues S274 and S337 each carry the phosphoserine modification. The segment at 385–448 (GTTDSTSNNT…STPLPSPLGA (64 aa)) is disordered. Residues 394-441 (TATVISTAPPASSAVTSPSLSPSPSASASTSEASSASETSTTQTTSTP) show a composition bias toward low complexity.

It belongs to the POU transcription factor family. Class-2 subfamily. In terms of assembly, interacts with POU2AF1; the interaction increases POU2F1 transactivation activity. Interacts with NR3C1, AR, PGR and HCFC1. Post-translationally, phosphorylated by PRKDC. As to expression, widely expressed.

The protein resides in the nucleus. Functionally, transcription factor that binds to the octamer motif (5'-ATTTGCAT-3') and activates the promoters of the genes for some small nuclear RNAs (snRNA) and of genes such as those for histone H2B and immunoglobulins. Modulates transcription transactivation by NR3C1, AR and PGR. In Rattus norvegicus (Rat), this protein is POU domain, class 2, transcription factor 1 (Pou2f1).